The sequence spans 704 residues: RCC1 domain-containing protein DDB_G0295713 (704 aa).

RCC1 repeat units lie at residues 1-48 and 69-120; these read MYCW…VKGE and KNRC…ITDQ. Residues 221 to 246 form a disordered region; the sequence is YNNNNNNNNNNNNNNNNNNNNNNNNN. Residues 222–246 show a composition bias toward low complexity; sequence NNNNNNNNNNNNNNNNNNNNNNNNN. An RCC1 3 repeat occupies 298 to 348; the sequence is QNQVYGWGENLNGQLGIEGIDYSTEPILIELPLVEIKHISSGAYHSAFVTN. Basic and acidic residues predominate over residues 412–431; it reads IKDKNENNETKHTNKNKDNH. Residues 412–458 are disordered; it reads IKDKNENNETKHTNKNKDNHDDDDESDHSDDDHHDDDDNDKDSQGIN. Acidic residues predominate over residues 432 to 451; that stretch reads DDDDESDHSDDDHHDDDDND. Residues 668-698 adopt a coiled-coil conformation; it reads IEQTSTQVANSENENENEIEMKMKMKKNEMK.

This is RCC1 domain-containing protein DDB_G0295713 from Dictyostelium discoideum (Social amoeba).